Consider the following 199-residue polypeptide: Probable GTP-binding protein EngB (199 aa).

An EngB-type G domain is found at 28 to 199 (DLPEIALAGR…DSWDAILEQV (172 aa)). GTP is bound by residues 36–43 (GRSNVGKS), 63–67 (GKTQL), 81–84 (DVPG), 148–151 (TKAD), and 180–182 (FSS). Residues Ser43 and Thr65 each contribute to the Mg(2+) site.

Belongs to the TRAFAC class TrmE-Era-EngA-EngB-Septin-like GTPase superfamily. EngB GTPase family. It depends on Mg(2+) as a cofactor.

Functionally, necessary for normal cell division and for the maintenance of normal septation. The sequence is that of Probable GTP-binding protein EngB from Streptococcus pyogenes serotype M28 (strain MGAS6180).